We begin with the raw amino-acid sequence, 579 residues long: Viral transcription factor IE2 (579 aa).

Residues 1–11 show a composition bias toward basic and acidic residues; sequence MESSAKRKMDP. 2 disordered regions span residues 1–30 and 99–161; these read MESS…TPVT and DSSS…VIIK. Polar residues predominate over residues 99-133; sequence DSSSTGPTLTTHSCSVSSAPLNKPTPTSVAVTNTP. Residues lysine 175 and lysine 180 each participate in a glycyl lysine isopeptide (Lys-Gly) (interchain with G-Cter in SUMO) cross-link. An SUMO-interacting motif 1/SIM1 motif is present at residues 199–202; the sequence is CIVI. Residues 200–208 are non-covalent SUMO1 binding region (SIM); sequence IVISDSEEE. Residues serine 203 and serine 205 each carry the phosphoserine modification. The interval 206-335 is disordered; that stretch reads EEEQGEEVET…SKRISELDNE (130 aa). 3 stretches are compositionally biased toward low complexity: residues 216 to 236, 259 to 270, and 301 to 316; these read RGAT…TSPT, SSSSSSCSSASD, and AASS…SSGG. Residues 409–412 carry the SUMO-interacting motif 1/SIM2 motif; sequence IQII. The SUMO-interacting motif 1/SIM3 signature appears at 500 to 503; sequence VDLL.

This sequence belongs to the HHV-5 IE2 protein family. In terms of assembly, interacts with host SUMO-modified form of TATA-binding protein (TBP)-associated factor 12/TAF12 in a SIM-dependent manner; this interaction increases the transactivation activity of IE2. Interacts with host CHAF1A. Interacts with several components of the host transcriptional machinery including TBP, TF2B and CREB1. Interacts with host DNA replication licensing factor MCM3. Interacts with host PLSCR1; this interaction inhibits IE2 transactivating activity. Post-translationally, phosphorylated by host CK2 at Ser-203 and Ser-205; leading to enhanced SUMOylation. In terms of processing, SUMOylated; SUMOylation is enhanced when IE2 is phosphorylated by host CK2. The sumoylation is necessary for efficient replication of the virus and thus for the function of this viral transcription factor.

It localises to the host nucleus. In terms of biological role, stimulates viral early and late gene expression and thus play a crucial role in the regulation of productive infection. Selectively drives host RNA Pol II transcription initiation at a subset of viral early-late and late promoters without substantially affecting Pol II transcription of expressed host genes. Mechanistically, forms a repressive complex at the major immediate-early promoter region involving direct association with host nucleosomes and TBP. Concerning activation, stimulates transcription by binding nearby, but not within, core promoter regions. In addition, activates quiescent cells to reenter the cell cycle and up-regulates several E2F-responsive genes, which are responsible for pushing the cell into S phase. In S-phase, inhibits cellular DNA synthesis and blocks further cell cycle progression. This is Viral transcription factor IE2 (UL122) from Homo sapiens (Human).